The chain runs to 62 residues: Conotoxin Lt5.8 (62 aa).

An N-terminal signal peptide occupies residues 1–19 (MLCLPVFIILLLLVSPAAT). Residues 20–47 (MPVDLEILKAPTKESRKDFEMRIELLRS) constitute a propeptide that is removed on maturation. Gln50 is subject to Pyrrolidone carboxylic acid. Gln61 is modified (glutamine amide).

The protein belongs to the conotoxin T superfamily. Contains 2 disulfide bonds that can be either 'C1-C3, C2-C4' or 'C1-C4, C2-C3', since these disulfide connectivities have been observed for conotoxins with cysteine framework V (for examples, see AC P0DQQ7 and AC P81755). In terms of tissue distribution, expressed by the venom duct.

It localises to the secreted. The protein is Conotoxin Lt5.8 of Conus litteratus (Lettered cone).